The primary structure comprises 168 residues: DOMON domain-containing protein CBG21753 (168 aa).

The first 17 residues, 1–17, serve as a signal peptide directing secretion; sequence MIKSMILVALILAFASA. In terms of domain architecture, DOMON spans 25-143; it reads SGFQSYWRFA…CQKWRWIKSG (119 aa). Residues Asn-35 and Asn-94 are each glycosylated (N-linked (GlcNAc...) asparagine). A disordered region spans residues 148–168; the sequence is GQLTRNSKSPKDKKVCPMECN. Over residues 156–168 the composition is skewed to basic and acidic residues; it reads SPKDKKVCPMECN.

It is found in the secreted. This chain is DOMON domain-containing protein CBG21753, found in Caenorhabditis briggsae.